Here is a 158-residue protein sequence, read N- to C-terminus: Putative cTAGE family member 3 (158 aa).

The stretch at 26–96 (QLQESQKQLL…AAVLEEDITD (71 aa)) forms a coiled coil.

The protein belongs to the cTAGE family. As to expression, expressed in normal tissues including colon, mammary gland, ovary, placenta, stomach and testis, as well as several fetal tissues.

Its function is as follows. Tumor-associated antigen. The polypeptide is Putative cTAGE family member 3 (CTAGE3P) (Homo sapiens (Human)).